Consider the following 74-residue polypeptide: Invertase 3 (74 aa).

A signal peptide spans 1 to 19 (MLLQAFIFLLAGFAAKISA). Residue Asn23 is glycosylated (N-linked (GlcNAc...) asparagine). Substrate is bound by residues 39–42 (WMND) and Gln60. Asp42 is an active-site residue. The N-linked (GlcNAc...) asparagine glycan is linked to Asn64.

It belongs to the glycosyl hydrolase 32 family.

It catalyses the reaction Hydrolysis of terminal non-reducing beta-D-fructofuranoside residues in beta-D-fructofuranosides.. The chain is Invertase 3 (SUC3) from Saccharomyces cerevisiae (Baker's yeast).